Here is an 89-residue protein sequence, read N- to C-terminus: Mitochondrial import inner membrane translocase subunit Tim9 (89 aa).

N-acetylalanine is present on A2. A Twin CX3C motif motif is present at residues 28 to 52; it reads CFLDCVKDFTTREVKPEETTCSEHC. Disulfide bonds link C28–C52 and C32–C48.

This sequence belongs to the small Tim family. In terms of assembly, heterohexamer; composed of 3 copies of TIMM9 and 3 copies of TIMM10/TIM10A, named soluble 70 kDa complex. The complex forms a 6-bladed alpha-propeller structure and associates with the TIMM22 component of the TIM22 complex. Interacts with multi-pass transmembrane proteins in transit. Also forms a complex composed of TIMM9, TIMM10/TIM10A and FXC1/TIM10B. As to expression, ubiquitous, with highest expression in heart, kidney, liver and skeletal muscle.

Its subcellular location is the mitochondrion inner membrane. In terms of biological role, mitochondrial intermembrane chaperone that participates in the import and insertion of multi-pass transmembrane proteins into the mitochondrial inner membrane. May also be required for the transfer of beta-barrel precursors from the TOM complex to the sorting and assembly machinery (SAM complex) of the outer membrane. Acts as a chaperone-like protein that protects the hydrophobic precursors from aggregation and guide them through the mitochondrial intermembrane space. This is Mitochondrial import inner membrane translocase subunit Tim9 (TIMM9) from Homo sapiens (Human).